Reading from the N-terminus, the 166-residue chain is Putative 4-hydroxy-4-methyl-2-oxoglutarate aldolase (166 aa).

Substrate contacts are provided by residues 74–77 (GDQI) and arginine 96. Residue aspartate 97 participates in a divalent metal cation binding.

This sequence belongs to the class II aldolase/RraA-like family. In terms of assembly, homotrimer. Requires a divalent metal cation as cofactor.

It carries out the reaction 4-hydroxy-4-methyl-2-oxoglutarate = 2 pyruvate. The enzyme catalyses oxaloacetate + H(+) = pyruvate + CO2. Functionally, catalyzes the aldol cleavage of 4-hydroxy-4-methyl-2-oxoglutarate (HMG) into 2 molecules of pyruvate. Also contains a secondary oxaloacetate (OAA) decarboxylase activity due to the common pyruvate enolate transition state formed following C-C bond cleavage in the retro-aldol and decarboxylation reactions. The polypeptide is Putative 4-hydroxy-4-methyl-2-oxoglutarate aldolase (Xanthomonas campestris pv. campestris (strain 8004)).